The chain runs to 408 residues: uncharacterized protein (408 aa).

The chain crosses the membrane as a helical span at residues 56-76; that stretch reads YWAGPAAASMVAAVTPYVAWL.

Belongs to the mycobacterial PPE family.

Its subcellular location is the cell membrane. This is an uncharacterized protein from Mycobacterium bovis (strain ATCC BAA-935 / AF2122/97).